Consider the following 449-residue polypeptide: Exodeoxyribonuclease 7 large subunit (449 aa).

It belongs to the XseA family. As to quaternary structure, heterooligomer composed of large and small subunits.

It localises to the cytoplasm. The catalysed reaction is Exonucleolytic cleavage in either 5'- to 3'- or 3'- to 5'-direction to yield nucleoside 5'-phosphates.. Bidirectionally degrades single-stranded DNA into large acid-insoluble oligonucleotides, which are then degraded further into small acid-soluble oligonucleotides. In Salmonella heidelberg (strain SL476), this protein is Exodeoxyribonuclease 7 large subunit.